Consider the following 287-residue polypeptide: 4-hydroxybenzoate octaprenyltransferase (287 aa).

A run of 9 helical transmembrane segments spans residues 21–41 (VGIFLLLWPTLWAVWIAAKGA), 44–64 (FKIAVIFIAGSVVMRAAGCIV), 91–111 (VTEAMLLFAVLSLIAFTLVLL), 112–132 (LNRLTVELAVIGILLALVYPF), 139–159 (LPQLWLGIAFSWSIPMAFAAT), 160–180 (VGHVPAVAWLLFFAAVLWPIV), 211–231 (LMIGLLQGSVLLTFGLLGWYL), 235–255 (YWFYLGLLVALGLMCYQQFLI), and 263–283 (CFAAFRNNNWVGFFIFLGILL).

The protein belongs to the UbiA prenyltransferase family. It depends on Mg(2+) as a cofactor.

It localises to the cell inner membrane. It carries out the reaction all-trans-octaprenyl diphosphate + 4-hydroxybenzoate = 4-hydroxy-3-(all-trans-octaprenyl)benzoate + diphosphate. It functions in the pathway cofactor biosynthesis; ubiquinone biosynthesis. Its function is as follows. Catalyzes the prenylation of para-hydroxybenzoate (PHB) with an all-trans polyprenyl group. Mediates the second step in the final reaction sequence of ubiquinone-8 (UQ-8) biosynthesis, which is the condensation of the polyisoprenoid side chain with PHB, generating the first membrane-bound Q intermediate 3-octaprenyl-4-hydroxybenzoate. The sequence is that of 4-hydroxybenzoate octaprenyltransferase from Coxiella burnetii (strain CbuK_Q154) (Coxiella burnetii (strain Q154)).